The chain runs to 273 residues: 4-hydroxy-tetrahydrodipicolinate reductase (273 aa).

NAD(+) is bound by residues 12–17 (GAGGRM) and E38. Residue R39 coordinates NADP(+). NAD(+)-binding positions include 102–104 (GTT) and 126–129 (AANF). H159 (proton donor/acceptor) is an active-site residue. H160 lines the (S)-2,3,4,5-tetrahydrodipicolinate pocket. The Proton donor role is filled by K163. 169 to 170 (GT) serves as a coordination point for (S)-2,3,4,5-tetrahydrodipicolinate.

This sequence belongs to the DapB family. In terms of assembly, homotetramer.

It is found in the cytoplasm. The catalysed reaction is (S)-2,3,4,5-tetrahydrodipicolinate + NAD(+) + H2O = (2S,4S)-4-hydroxy-2,3,4,5-tetrahydrodipicolinate + NADH + H(+). It catalyses the reaction (S)-2,3,4,5-tetrahydrodipicolinate + NADP(+) + H2O = (2S,4S)-4-hydroxy-2,3,4,5-tetrahydrodipicolinate + NADPH + H(+). Its pathway is amino-acid biosynthesis; L-lysine biosynthesis via DAP pathway; (S)-tetrahydrodipicolinate from L-aspartate: step 4/4. Functionally, catalyzes the conversion of 4-hydroxy-tetrahydrodipicolinate (HTPA) to tetrahydrodipicolinate. This Yersinia pestis bv. Antiqua (strain Antiqua) protein is 4-hydroxy-tetrahydrodipicolinate reductase.